The following is a 442-amino-acid chain: Shufflon protein B (442 aa).

Residues Met1–Gly361 form a constant region region. A variable region region spans residues Thr362 to Lys442.

This Escherichia coli protein is Shufflon protein B.